Here is a 363-residue protein sequence, read N- to C-terminus: UDP-N-acetylglucosamine--N-acetylmuramyl-(pentapeptide) pyrophosphoryl-undecaprenol N-acetylglucosamine transferase (363 aa).

UDP-N-acetyl-alpha-D-glucosamine is bound by residues 13-15 (TGG), Asn125, Arg166, Ser195, Ile249, 268-273 (ALTVSE), and Gln294.

This sequence belongs to the glycosyltransferase 28 family. MurG subfamily.

It is found in the cell inner membrane. The enzyme catalyses di-trans,octa-cis-undecaprenyl diphospho-N-acetyl-alpha-D-muramoyl-L-alanyl-D-glutamyl-meso-2,6-diaminopimeloyl-D-alanyl-D-alanine + UDP-N-acetyl-alpha-D-glucosamine = di-trans,octa-cis-undecaprenyl diphospho-[N-acetyl-alpha-D-glucosaminyl-(1-&gt;4)]-N-acetyl-alpha-D-muramoyl-L-alanyl-D-glutamyl-meso-2,6-diaminopimeloyl-D-alanyl-D-alanine + UDP + H(+). Its pathway is cell wall biogenesis; peptidoglycan biosynthesis. In terms of biological role, cell wall formation. Catalyzes the transfer of a GlcNAc subunit on undecaprenyl-pyrophosphoryl-MurNAc-pentapeptide (lipid intermediate I) to form undecaprenyl-pyrophosphoryl-MurNAc-(pentapeptide)GlcNAc (lipid intermediate II). This Cellvibrio japonicus (strain Ueda107) (Pseudomonas fluorescens subsp. cellulosa) protein is UDP-N-acetylglucosamine--N-acetylmuramyl-(pentapeptide) pyrophosphoryl-undecaprenol N-acetylglucosamine transferase.